Consider the following 120-residue polypeptide: Large ribosomal subunit protein uL18 (120 aa).

It belongs to the universal ribosomal protein uL18 family. In terms of assembly, part of the 50S ribosomal subunit; part of the 5S rRNA/L5/L18/L25 subcomplex. Contacts the 5S and 23S rRNAs.

Functionally, this is one of the proteins that bind and probably mediate the attachment of the 5S RNA into the large ribosomal subunit, where it forms part of the central protuberance. This Treponema denticola (strain ATCC 35405 / DSM 14222 / CIP 103919 / JCM 8153 / KCTC 15104) protein is Large ribosomal subunit protein uL18.